Consider the following 510-residue polypeptide: MIWHVQNENFILDSTRIFMKAFHLLLFHGSFIFPECILIFGLILLLMIDLTSDQKDRPWFYFISSTSLVISITALLFRWREEPIISFSGNFQTNNFNEIFQFLILLCSTLCIPLSVEYIECTEMAITEFLLFVLTATLGGMFLCGANDLITIFVALECFSLCSYLLSGYTKRDLRSNEATMKYLLMGGASSSILVYGFSWLYGLSGGEIELQEIVNGLINTQMYNSPGISIALIFITVGLGFKLSLAPFHQWTPDVYEGSPTPVVAFLSVTSKVAALALATRILDIPFYFSSNEWHLLLEILAILSMILGNLLAITQTSMKRMLAYSSIGQIGYVIIGIIVGDSNDGYASMITYMLFYISMNLGTFACIVLFGLRTGTDNIRDYAGLYTKDPFLALSLALCLLSLGGLPPLAGFFGKLYLFWCGWQAGLYFLVSIGLLTSVLSIYYYLKIIKLLMTGRNQEITPYVRNYRRSPLRSNNSIELSMTVCVIASTILGISMNPILAIAQDTLF.

Helical transmembrane passes span 24–44 (LLLF…GLIL), 59–79 (WFYF…LFRW), 99–119 (IFQF…VEYI), 124–144 (MAIT…MFLC), 149–169 (LITI…LSGY), 184–204 (LLMG…LYGL), 229–249 (ISIA…LAPF), 261–281 (PTPV…ALAT), 295–315 (WHLL…LLAI), 323–343 (MLAY…IVGD), 354–374 (YMLF…LFGL), 395–415 (ALSL…AGFF), 418–438 (LYLF…IGLL), and 484–504 (MTVC…ILAI).

It belongs to the complex I subunit 2 family. In terms of assembly, NDH is composed of at least 16 different subunits, 5 of which are encoded in the nucleus.

The protein localises to the plastid. The protein resides in the chloroplast thylakoid membrane. The catalysed reaction is a plastoquinone + NADH + (n+1) H(+)(in) = a plastoquinol + NAD(+) + n H(+)(out). It catalyses the reaction a plastoquinone + NADPH + (n+1) H(+)(in) = a plastoquinol + NADP(+) + n H(+)(out). Functionally, NDH shuttles electrons from NAD(P)H:plastoquinone, via FMN and iron-sulfur (Fe-S) centers, to quinones in the photosynthetic chain and possibly in a chloroplast respiratory chain. The immediate electron acceptor for the enzyme in this species is believed to be plastoquinone. Couples the redox reaction to proton translocation, and thus conserves the redox energy in a proton gradient. The sequence is that of NAD(P)H-quinone oxidoreductase subunit 2 B, chloroplastic from Zea mays (Maize).